Consider the following 385-residue polypeptide: NADH-ubiquinone oxidoreductase chain 2 (385 aa).

The next 10 membrane-spanning stretches (helical) occupy residues 12–32 (PVLV…SNWL), 34–50 (VYLA…ILVA), 66–86 (FVLG…LCGL), 112–132 (VITP…LSAA), 161–181 (VFSI…ATIF), 200–220 (LAYS…IGTF), 227–247 (LIYM…VLAL), 268–288 (AITL…IGFF), 291–311 (WWIL…LAVI), and 354–374 (LLIG…NLLL).

It belongs to the complex I subunit 2 family.

It is found in the mitochondrion inner membrane. It catalyses the reaction a ubiquinone + NADH + 5 H(+)(in) = a ubiquinol + NAD(+) + 4 H(+)(out). Functionally, core subunit of the mitochondrial membrane respiratory chain NADH dehydrogenase (Complex I) that is believed to belong to the minimal assembly required for catalysis. Complex I functions in the transfer of electrons from NADH to the respiratory chain. The immediate electron acceptor for the enzyme is believed to be ubiquinone. This Metridium senile (Brown sea anemone) protein is NADH-ubiquinone oxidoreductase chain 2 (ND2).